Reading from the N-terminus, the 319-residue chain is Methionyl-tRNA formyltransferase (319 aa).

A (6S)-5,6,7,8-tetrahydrofolate-binding site is contributed by Ser-116 to Pro-119.

Belongs to the Fmt family.

It catalyses the reaction L-methionyl-tRNA(fMet) + (6R)-10-formyltetrahydrofolate = N-formyl-L-methionyl-tRNA(fMet) + (6S)-5,6,7,8-tetrahydrofolate + H(+). Its function is as follows. Attaches a formyl group to the free amino group of methionyl-tRNA(fMet). The formyl group appears to play a dual role in the initiator identity of N-formylmethionyl-tRNA by promoting its recognition by IF2 and preventing the misappropriation of this tRNA by the elongation apparatus. In Wigglesworthia glossinidia brevipalpis, this protein is Methionyl-tRNA formyltransferase.